The following is a 145-amino-acid chain: Copper transporter 6 (145 aa).

2 helical membrane passes run 47–67 (LGMY…VEWL) and 99–119 (YLVM…AIAG).

It belongs to the copper transporter (Ctr) (TC 1.A.56) family. SLC31A subfamily.

Its subcellular location is the membrane. Its function is as follows. Involved in the transport of copper. The chain is Copper transporter 6 (COPT6) from Arabidopsis thaliana (Mouse-ear cress).